The primary structure comprises 101 residues: NADH-quinone oxidoreductase subunit K (101 aa).

Transmembrane regions (helical) follow at residues 4-24 (LAHY…GIFL), 29-49 (IIII…NFVA), and 61-81 (IFVF…LAIL).

This sequence belongs to the complex I subunit 4L family. NDH-1 is composed of 14 different subunits. Subunits NuoA, H, J, K, L, M, N constitute the membrane sector of the complex.

The protein resides in the cell inner membrane. It catalyses the reaction a quinone + NADH + 5 H(+)(in) = a quinol + NAD(+) + 4 H(+)(out). Functionally, NDH-1 shuttles electrons from NADH, via FMN and iron-sulfur (Fe-S) centers, to quinones in the respiratory chain. The immediate electron acceptor for the enzyme in this species is believed to be ubiquinone. Couples the redox reaction to proton translocation (for every two electrons transferred, four hydrogen ions are translocated across the cytoplasmic membrane), and thus conserves the redox energy in a proton gradient. In Burkholderia vietnamiensis (strain G4 / LMG 22486) (Burkholderia cepacia (strain R1808)), this protein is NADH-quinone oxidoreductase subunit K.